Reading from the N-terminus, the 182-residue chain is UPF0301 protein NMC1274 (182 aa).

The protein belongs to the UPF0301 (AlgH) family.

In Neisseria meningitidis serogroup C / serotype 2a (strain ATCC 700532 / DSM 15464 / FAM18), this protein is UPF0301 protein NMC1274.